The primary structure comprises 293 residues: Bifunctional monothiol glutaredoxin-S16, chloroplastic (293 aa).

Residues 1-62 constitute a chloroplast transit peptide; sequence MAAITISSSL…APSRRRSFFI (62 aa). An intrachain disulfide couples cysteine 123 to cysteine 219. The Glutaredoxin domain maps to 194–293; it reads EELIDRLVKE…ENGELANILN (100 aa). Lysine 211 provides a ligand contact to glutathione. Cysteine 219 lines the [2Fe-2S] cluster pocket. Residues arginine 251, phenylalanine 263, and 276 to 277 each bind glutathione; that span reads CD.

It belongs to the glutaredoxin family. CGFS subfamily. As to quaternary structure, [2Fe-2S]-bridged holo-homodimer. Interacts in vitro with SUFE1, BOLA1, BOLA2 and BOLA4. Interacts in vivo only with SUFE1, BOLA1 and BOLA4. Interacts with SBP1.

It is found in the plastid. The protein localises to the chloroplast. Its activity is regulated as follows. The formation of an intramolecular disulfide bond negatively regulates both the N-terminal endonuclease and the C-terminal glutaredoxin activities. In terms of biological role, may only reduce GSH-thiol disulfides, but not protein disulfides. Participates probably to the maturation of iron-sulfur proteins and to the regulation of the redox state of the BOLA proteins. The GRXS16-BOLA1 heterodimer binds a labile, oxygen sensitive iron-sulfur cluster. Able to cleave linearized DNA in vitro. The chain is Bifunctional monothiol glutaredoxin-S16, chloroplastic from Arabidopsis thaliana (Mouse-ear cress).